The sequence spans 267 residues: Apolipoprotein A-I (267 aa).

An N-terminal signal peptide occupies residues 1 to 18; the sequence is MKATVLTLAVLFLTGSQA. 2 repeat units span residues 68–89 and 90–111. The 10 X approximate tandem repeats stretch occupies residues 68-267; it reads LKLLDNWDSV…EEYTKKLSTQ (200 aa). Methionine 110 is modified (methionine sulfoxide). The stretch at 112-122 is one 3; half-length repeat; that stretch reads KDLEEVKAKVQ. 5 repeat units span residues 123-144, 145-166, 167-188, 189-210, and 211-232. Methionine 136 is modified (methionine sulfoxide). The 9; half-length repeat unit spans residues 233-243; it reads PALEDLRQGLL. The stretch at 244 to 267 is repeat 10; the sequence is PVLESFKVSFLSALEEYTKKLSTQ.

The protein belongs to the apolipoprotein A1/A4/E family. Homodimer. Interacts with APOA1BP and CLU. Component of a sperm activating protein complex (SPAP), consisting of APOA1, an immunoglobulin heavy chain, an immunoglobulin light chain and albumin. Interacts with NDRG1. Interacts with SCGB3A2. Interacts with NAXE and YJEFN3. Post-translationally, glycosylated. Palmitoylated. In terms of processing, phosphorylation sites are present in the extracellular medium. As to expression, major protein of plasma HDL, also found in chylomicrons.

Its subcellular location is the secreted. In terms of biological role, participates in the reverse transport of cholesterol from tissues to the liver for excretion by promoting cholesterol efflux from tissues and by acting as a cofactor for the lecithin cholesterol acyltransferase (LCAT). As part of the SPAP complex, activates spermatozoa motility. This is Apolipoprotein A-I (APOA1) from Papio hamadryas (Hamadryas baboon).